The sequence spans 485 residues: Amino acid permease 1 (485 aa).

Residues methionine 1–glutamate 15 are compositionally biased toward polar residues. The disordered stretch occupies residues methionine 1–glutamate 35. The Cytoplasmic portion of the chain corresponds to methionine 1 to threonine 40. A run of 2 helical transmembrane segments spans residues tryptophan 41–alanine 61 and tryptophan 62–isoleucine 82. Topologically, residues threonine 83 to tyrosine 129 are cytoplasmic. Residues glycine 130–valine 150 form a helical membrane-spanning segment. The Extracellular portion of the chain corresponds to glycine 151 to threonine 166. Residues isoleucine 167–proline 187 form a helical membrane-spanning segment. Residues asparagine 188–phenylalanine 194 lie on the Cytoplasmic side of the membrane. A helical membrane pass occupies residues leucine 195–isoleucine 215. Residues alanine 216–arginine 245 lie on the Extracellular side of the membrane. Residues serine 246–isoleucine 266 form a helical membrane-spanning segment. Topologically, residues glutamine 267 to leucine 285 are cytoplasmic. A helical membrane pass occupies residues valine 286–phenylalanine 306. The Extracellular segment spans residues glycine 307 to phenylalanine 318. The chain crosses the membrane as a helical span at residues glycine 319 to isoleucine 339. Residues glycine 340–tyrosine 394 lie on the Cytoplasmic side of the membrane. Helical transmembrane passes span valine 395–isoleucine 415 and glycine 416–threonine 436. At lysine 437–threonine 450 the chain is on the cytoplasmic side. A helical membrane pass occupies residues methionine 451 to isoleucine 471. Residues serine 472–glutamate 485 are Extracellular-facing.

Belongs to the amino acid/polyamine transporter 2 family. Amino acid/auxin permease (AAAP) (TC 2.A.18.2) subfamily. As to expression, highly expressed in developing pods. Found in the endosperm and in the storage parenchyma and the outer epidermis cells of the developing embryo. Lower levels of expression in flowers, in the vascular system of the cotyledon and in the root epidermal cells, including root hairs and throughout the root tip.

It is found in the cell membrane. Inhibited by carbonylcyanide m-chlorophenylhydrazone and diethylpyrocarbonate (DEPC). Its function is as follows. Amino acid-proton symporter. Stereospecific transporter with a broad specificity for histidine, glutamate and neutral amino acids. Reduced affinities for asparagine and valine. Involved in amino acid uptake from the apoplastic cavity into the embryo cells for storage protein accumulation and in root amino acid uptake. The protein is Amino acid permease 1 (AAP1) of Arabidopsis thaliana (Mouse-ear cress).